A 451-amino-acid chain; its full sequence is Metalloprotease MJ0996 (451 aa).

This sequence belongs to the peptidase U62 family.

In terms of biological role, probable metalloprotease. The chain is Metalloprotease MJ0996 from Methanocaldococcus jannaschii (strain ATCC 43067 / DSM 2661 / JAL-1 / JCM 10045 / NBRC 100440) (Methanococcus jannaschii).